The following is a 180-amino-acid chain: LDLR chaperone boca (180 aa).

Positions 1–18 are cleaved as a signal peptide; it reads MQTRLVLLLLALTPLVLA. A compositionally biased stretch (acidic residues) spans 48 to 61; that stretch reads QWEEDEEPLEDDEL. Positions 48-78 are disordered; sequence QWEEDEEPLEDDELPEHLRPQPKLDLSNLDS. Residues 93–166 are structured core; that stretch reads TLMTFVSVTG…QERCKGVTIE (74 aa). The short motif at 177–180 is the Prevents secretion from ER element; the sequence is KDEL.

Belongs to the MESD family. In terms of assembly, monomer. Interacts with Arrow and Yolkless.

The protein localises to the endoplasmic reticulum. In terms of biological role, chaperone specifically assisting the folding of beta-propeller/EGF modules within the family of low-density lipoprotein receptors (LDLRs). Acts as a modulator of the Wg pathway, since some LDLRs are coreceptors for the canonical Wnt pathway. In Drosophila melanogaster (Fruit fly), this protein is LDLR chaperone boca (boca).